A 527-amino-acid chain; its full sequence is Probable malate:quinone oxidoreductase (527 aa).

It belongs to the MQO family. Requires FAD as cofactor.

It carries out the reaction (S)-malate + a quinone = a quinol + oxaloacetate. It functions in the pathway carbohydrate metabolism; tricarboxylic acid cycle; oxaloacetate from (S)-malate (quinone route): step 1/1. This Pectobacterium carotovorum subsp. carotovorum (strain PC1) protein is Probable malate:quinone oxidoreductase.